A 150-amino-acid chain; its full sequence is Linear element protein rec25 (150 aa).

The residue at position 11 (S11) is a Phosphoserine.

In terms of assembly, component of linear elements (LinEs), which are similar to synaptonemal complexes, at least composed of rec27, rec25, rec10 and mug20. Interacts with rec10; the interaction is direct.

It is found in the cytoplasm. Its subcellular location is the nucleus. The protein resides in the chromosome. During meiotic DNA recombination, binds to and may help activate DNA double-strand break (DSB) hotspot sites. In Schizosaccharomyces pombe (strain 972 / ATCC 24843) (Fission yeast), this protein is Linear element protein rec25.